Reading from the N-terminus, the 415-residue chain is Histidine--tRNA ligase (415 aa).

This sequence belongs to the class-II aminoacyl-tRNA synthetase family. Homodimer.

Its subcellular location is the cytoplasm. It catalyses the reaction tRNA(His) + L-histidine + ATP = L-histidyl-tRNA(His) + AMP + diphosphate + H(+). The chain is Histidine--tRNA ligase from Clostridium botulinum (strain Okra / Type B1).